A 209-amino-acid polypeptide reads, in one-letter code: Mitochondrial import inner membrane translocase subunit Tim23 (209 aa).

The next 3 membrane-spanning stretches (helical) occupy residues 73–93, 125–145, and 181–197; these read FELAFFTIGGCCMTGAAFGAM, ALWANTLGSLALLYSAFGVII, and GLAGLTLTSLYALYNNW.

The protein belongs to the Tim17/Tim22/Tim23 family. Component of the TIM23 complex at least composed of TIMM23, TIMM17 (TIMM17A or TIMM17B) and TIMM50; within this complex, directly interacts with TIMM50. The complex interacts with the TIMM44 component of the PAM complex and with DNAJC15. Upon mitochondrial depolarization, interacts with PINK1; the interaction is required for PINK1 accumulation at the outer mitochondrial membrane, kinase activation by autophosphorylation and PRKN recruitement to mitochondria.

It localises to the mitochondrion inner membrane. In terms of biological role, essential component of the TIM23 complex, a complex that mediates the translocation of transit peptide-containing proteins across the mitochondrial inner membrane. Has a role in the activation of stress-induced mitophagy by protecting PINK1 from OMA1-mediated degradation and facilitating its accumulation at the outer mitochondrial membrane in response to depolarization. The polypeptide is Mitochondrial import inner membrane translocase subunit Tim23 (Timm23) (Mus musculus (Mouse)).